The following is a 248-amino-acid chain: MNVLPCSINTLKGLYEISGVEVGQHFYWQIGGFQVHAQVLITSWVVIAILLGSAAIAVRNPQTIPTDGQNFFEYVLEFIRDVSKTQIGEEEYGPWVPFIGTLFLFIFVSNWSGALLPWRIIQLPHGELAAPTNDINTTVALALPTSVAYFYAGLTKKGLGYFGKYIQPTPILLPINVLEDFTKPLSLSFRLFGNILADELVVVVLVSLVPLVIPIPVMFLGLFTSGIQALIFATLAAAYIGESMEGHH.

A run of 5 helical transmembrane segments spans residues 38 to 58, 96 to 116, 135 to 155, 200 to 220, and 221 to 241; these read QVLI…AIAV, VPFI…GALL, INTT…AGLT, LVVV…VMFL, and GLFT…AYIG.

This sequence belongs to the ATPase A chain family. As to quaternary structure, F-type ATPases have 2 components, CF(1) - the catalytic core - and CF(0) - the membrane proton channel. CF(1) has five subunits: alpha(3), beta(3), gamma(1), delta(1), epsilon(1). CF(0) has four main subunits: a, b, b' and c.

It localises to the plastid. The protein resides in the chloroplast thylakoid membrane. Functionally, key component of the proton channel; it plays a direct role in the translocation of protons across the membrane. This Nymphaea alba (White water-lily) protein is ATP synthase subunit a, chloroplastic.